The sequence spans 737 residues: Translation initiation factor IF-2 (737 aa).

The disordered stretch occupies residues 55-152 (KKKEHIQHNK…PVPPRKNKPL (98 aa)). The segment covering 60-70 (IQHNKNKDNFH) has biased composition (basic and acidic residues). Over residues 88–98 (KNVHKNNRKRS) the composition is skewed to basic residues. Over residues 105 to 121 (NNNAKNGQRNNRNNRSN) the composition is skewed to low complexity. The segment covering 122-131 (NKFKNKRNNN) has biased composition (basic residues). The span at 132-142 (NKRNNNFKKGN) shows a compositional bias: low complexity. The region spanning 238 to 407 (KRPPVVTIMG…LLEAEMLELH (170 aa)) is the tr-type G domain. Residues 247-254 (GHVDHGKT) form a G1 region. 247-254 (GHVDHGKT) contributes to the GTP binding site. The tract at residues 272–276 (GITQH) is G2. The interval 293–296 (DTPG) is G3. Residues 293–297 (DTPGH) and 347–350 (NKID) contribute to the GTP site. Residues 347 to 350 (NKID) form a G4 region. The G5 stretch occupies residues 383–385 (SAK).

It belongs to the TRAFAC class translation factor GTPase superfamily. Classic translation factor GTPase family. IF-2 subfamily.

The protein localises to the cytoplasm. Its function is as follows. One of the essential components for the initiation of protein synthesis. Protects formylmethionyl-tRNA from spontaneous hydrolysis and promotes its binding to the 30S ribosomal subunits. Also involved in the hydrolysis of GTP during the formation of the 70S ribosomal complex. The polypeptide is Translation initiation factor IF-2 (Ligilactobacillus salivarius (strain UCC118) (Lactobacillus salivarius)).